We begin with the raw amino-acid sequence, 341 residues long: Tryptophan--tRNA ligase (341 aa).

ATP-binding positions include 11–13 (RPT) and 19–20 (GH). The 'HIGH' region motif lies at 12–20 (PTGKLHIGH). Asp-140 contacts L-tryptophan. ATP-binding positions include 152–154 (GTD), Leu-194, and 202–206 (KMSKS). The 'KMSKS' region signature appears at 202–206 (KMSKS).

This sequence belongs to the class-I aminoacyl-tRNA synthetase family. In terms of assembly, homodimer.

It is found in the cytoplasm. It carries out the reaction tRNA(Trp) + L-tryptophan + ATP = L-tryptophyl-tRNA(Trp) + AMP + diphosphate + H(+). Its function is as follows. Catalyzes the attachment of tryptophan to tRNA(Trp). In Streptococcus pneumoniae serotype 4 (strain ATCC BAA-334 / TIGR4), this protein is Tryptophan--tRNA ligase.